We begin with the raw amino-acid sequence, 245 residues long: MVVKLVNNELKILSGKLRDIFREIYNKIKNDENINDRNLDDKVLSLLKDYTISEENLKIKFSEPKDEIYSYEGRRTPYDLLCYGIINGKNFLIFINNKFGDLKSNTRNDVTTYNNLLRLYLGIKRQRLTSEITINGELVYNRISGNEIVSYGIFVVDKYRRGYKFFLLEEIKDDFYVNPRNNMFQIRYSPNLGDPIDYFAFVKKLIDAILESLEKSLNSIKTEILVLNSIKIQLINIKEGKHGED.

It carries out the reaction Endonucleolytic cleavage of DNA to give specific double-stranded fragments with terminal 5'-phosphates.. Its function is as follows. A P subtype restriction enzyme that recognizes the double-stranded sequence 5'-GTNNAC-3'; the cleavage site is unknown. In Methanocaldococcus jannaschii (strain ATCC 43067 / DSM 2661 / JAL-1 / JCM 10045 / NBRC 100440) (Methanococcus jannaschii), this protein is Type II restriction enzyme MjaIV (mjaIVR).